A 337-amino-acid chain; its full sequence is Eukaryotic translation initiation factor 3 subunit H (337 aa).

An MPN domain is found at 21-153 (VQCDGLAVMK…LKAYRLTPQA (133 aa)).

This sequence belongs to the eIF-3 subunit H family. Component of the eukaryotic translation initiation factor 3 (eIF-3) complex. The eIF-3 complex interacts with pix. Interacts with mxt.

The protein resides in the cytoplasm. In terms of biological role, component of the eukaryotic translation initiation factor 3 (eIF-3) complex, which is involved in protein synthesis of a specialized repertoire of mRNAs and, together with other initiation factors, stimulates binding of mRNA and methionyl-tRNAi to the 40S ribosome. The eIF-3 complex specifically targets and initiates translation of a subset of mRNAs involved in cell proliferation. This Drosophila virilis (Fruit fly) protein is Eukaryotic translation initiation factor 3 subunit H.